We begin with the raw amino-acid sequence, 780 residues long: Heat shock protein 90-5, chloroplastic (780 aa).

Residues 1-60 constitute a chloroplast transit peptide; sequence MAPALSRSLYTSPLTSVPITPVSSRLSHLRSSFLPHGGALRTGVSCSWNLEKRCNRFAVK. Residues E106, N110, D152, M157, 172–173, 196–201, T251, and R441 contribute to the ATP site; these read SG and QFGVGF. Residues 742–780 form a disordered region; the sequence is GRVEEEEESSTVNEGDDKSGETEVVEPSEVRAESDPWQD. A compositionally biased stretch (basic and acidic residues) spans 769 to 780; that stretch reads SEVRAESDPWQD.

The protein belongs to the heat shock protein 90 family. As to quaternary structure, homodimer. Interacts with VIPP1. Interacts with P23-1. As to expression, expressed in roots, cotyledons, young leaves, mature leaves, stems, flowers, petals and siliques.

It is found in the plastid. The protein resides in the chloroplast stroma. Molecular chaperone required for chloroplast biogenesis. Essential for chloroplast biogenesis and maintenance, and thus for embryogenesis. May be involved in the disassembly of VIPP1 for thylakoid membrane formation and/or maintenance. Cooperates with TIC components and other molecular chaperones to drive transport of preproteins into chloroplasts and functions in the chloroplast stroma to facilitate membrane translocation during protein import into the organelle. The polypeptide is Heat shock protein 90-5, chloroplastic (Arabidopsis thaliana (Mouse-ear cress)).